Reading from the N-terminus, the 233-residue chain is 3-dehydroquinate dehydratase (233 aa).

3-dehydroquinate contacts are provided by residues 39–41 (EIR) and Arg-73. His-132 functions as the Proton donor/acceptor in the catalytic mechanism. Catalysis depends on Lys-159, which acts as the Schiff-base intermediate with substrate. 3-dehydroquinate is bound by residues Arg-196 and Gln-219.

This sequence belongs to the type-I 3-dehydroquinase family. Homodimer.

It catalyses the reaction 3-dehydroquinate = 3-dehydroshikimate + H2O. Its pathway is metabolic intermediate biosynthesis; chorismate biosynthesis; chorismate from D-erythrose 4-phosphate and phosphoenolpyruvate: step 3/7. In terms of biological role, involved in the third step of the chorismate pathway, which leads to the biosynthesis of aromatic amino acids. Catalyzes the cis-dehydration of 3-dehydroquinate (DHQ) and introduces the first double bond of the aromatic ring to yield 3-dehydroshikimate. This is 3-dehydroquinate dehydratase from Methanococcoides burtonii (strain DSM 6242 / NBRC 107633 / OCM 468 / ACE-M).